The chain runs to 797 residues: Ubiquitin carboxyl-terminal hydrolase 14 (797 aa).

Residues 156 to 266 form a UBP-type; degenerate zinc finger; sequence LISEHALTLQ…EHLAHFGIDF (111 aa). Zn(2+) contacts are provided by Cys-180, Cys-183, Cys-200, and His-213. One can recognise a USP domain in the interval 308 to 796; sequence TGLVNLGNSC…MGYVYFFQRL (489 aa). Residue Cys-317 is the Nucleophile of the active site. 2 UBA domains span residues 613 to 654 and 670 to 710; these read VANE…LLSH and DIDQ…VFNN. The active-site Proton acceptor is the His-758.

Belongs to the peptidase C19 family. In terms of tissue distribution, constitutively and ubiquitously expressed (at protein level).

It carries out the reaction Thiol-dependent hydrolysis of ester, thioester, amide, peptide and isopeptide bonds formed by the C-terminal Gly of ubiquitin (a 76-residue protein attached to proteins as an intracellular targeting signal).. Its function is as follows. Recognizes and hydrolyzes the peptide bond at the C-terminal Gly of ubiquitin. Involved in the processing of poly-ubiquitin precursors as well as that of ubiquitinated proteins. Involved in seed and embryo development. This chain is Ubiquitin carboxyl-terminal hydrolase 14 (UBP14), found in Arabidopsis thaliana (Mouse-ear cress).